The primary structure comprises 494 residues: Glutamate--tRNA ligase (494 aa).

The 'HIGH' region motif lies at 9–19; it reads PSPTGPLHIGS. Residues 249–253 carry the 'KMSKS' region motif; that stretch reads KLSKR. An ATP-binding site is contributed by K252.

The protein belongs to the class-I aminoacyl-tRNA synthetase family. Glutamate--tRNA ligase type 1 subfamily. As to quaternary structure, monomer.

The protein localises to the cytoplasm. The enzyme catalyses tRNA(Glu) + L-glutamate + ATP = L-glutamyl-tRNA(Glu) + AMP + diphosphate. In terms of biological role, catalyzes the attachment of glutamate to tRNA(Glu) in a two-step reaction: glutamate is first activated by ATP to form Glu-AMP and then transferred to the acceptor end of tRNA(Glu). The sequence is that of Glutamate--tRNA ligase from Azobacteroides pseudotrichonymphae genomovar. CFP2.